The sequence spans 236 residues: Small ribosomal subunit protein uS2c (236 aa).

The protein belongs to the universal ribosomal protein uS2 family.

The protein resides in the plastid. It localises to the chloroplast. The polypeptide is Small ribosomal subunit protein uS2c (rps2) (Citrus sinensis (Sweet orange)).